The following is a 612-amino-acid chain: Dihydroxy-acid dehydratase (612 aa).

Residue Asp-81 coordinates Mg(2+). Residue Cys-122 coordinates [2Fe-2S] cluster. Mg(2+)-binding residues include Asp-123 and Lys-124. Residue Lys-124 is modified to N6-carboxylysine. Cys-195 is a [2Fe-2S] cluster binding site. Mg(2+) is bound at residue Glu-491. Ser-517 acts as the Proton acceptor in catalysis.

This sequence belongs to the IlvD/Edd family. As to quaternary structure, homodimer. Requires [2Fe-2S] cluster as cofactor. Mg(2+) is required as a cofactor.

It catalyses the reaction (2R)-2,3-dihydroxy-3-methylbutanoate = 3-methyl-2-oxobutanoate + H2O. The catalysed reaction is (2R,3R)-2,3-dihydroxy-3-methylpentanoate = (S)-3-methyl-2-oxopentanoate + H2O. It participates in amino-acid biosynthesis; L-isoleucine biosynthesis; L-isoleucine from 2-oxobutanoate: step 3/4. It functions in the pathway amino-acid biosynthesis; L-valine biosynthesis; L-valine from pyruvate: step 3/4. Functionally, functions in the biosynthesis of branched-chain amino acids. Catalyzes the dehydration of (2R,3R)-2,3-dihydroxy-3-methylpentanoate (2,3-dihydroxy-3-methylvalerate) into 2-oxo-3-methylpentanoate (2-oxo-3-methylvalerate) and of (2R)-2,3-dihydroxy-3-methylbutanoate (2,3-dihydroxyisovalerate) into 2-oxo-3-methylbutanoate (2-oxoisovalerate), the penultimate precursor to L-isoleucine and L-valine, respectively. This is Dihydroxy-acid dehydratase from Rhizobium etli (strain ATCC 51251 / DSM 11541 / JCM 21823 / NBRC 15573 / CFN 42).